A 142-amino-acid chain; its full sequence is Large ribosomal subunit protein uL13 (142 aa).

This sequence belongs to the universal ribosomal protein uL13 family. Part of the 50S ribosomal subunit.

Its function is as follows. This protein is one of the early assembly proteins of the 50S ribosomal subunit, although it is not seen to bind rRNA by itself. It is important during the early stages of 50S assembly. This chain is Large ribosomal subunit protein uL13, found in Serratia proteamaculans (strain 568).